We begin with the raw amino-acid sequence, 317 residues long: Protein lifeguard 2 (317 aa).

The segment at 1–54 (MTQGKLSVANKAPGTEGQQHQANGEKKDAPAVPSAPPSYEEATSGEGLKAGTFP) is disordered. 3 helical membrane passes run 107–127 (VYTILLVQLLVTLAVVALFTF), 139–159 (PGWYWASYAVFFATYLTLACC), and 166–186 (FPWNLILLTIFTLSMAYLTGM). The N-linked (GlcNAc...) asparagine glycan is linked to Asn192. A run of 4 helical transmembrane segments spans residues 195–215 (SVLLCLVITALVCLSVTIFSF), 226–246 (GVLFVLLMTLFFSGLLLAVLL), 252–272 (PWLHAVYAVLGAGVFTLFLAF), and 291–311 (IFGALNIYLDIIYIFTFFLQL).

It belongs to the BI1 family. LFG subfamily. As to quaternary structure, interacts with FAS/TNFRSF6 and BAX. In terms of tissue distribution, brain. Highly expressed in cerebellum, also found in cortex, olfactory bulb, and hippocampus.

The protein localises to the cell membrane. It localises to the membrane raft. It is found in the postsynaptic cell membrane. In terms of biological role, antiapoptotic protein which protects cells uniquely from Fas-induced apoptosis. Regulates Fas-mediated apoptosis in neurons by interfering with caspase-8 activation. Plays a role in cerebellar development by affecting cerebellar size, internal granular layer (IGL) thickness, and Purkinje cell (PC) development. The polypeptide is Protein lifeguard 2 (Faim2) (Mus musculus (Mouse)).